A 221-amino-acid polypeptide reads, in one-letter code: ATP-dependent Clp protease proteolytic subunit 3 (221 aa).

The active-site Nucleophile is Ser-118. The active site involves His-143.

Belongs to the peptidase S14 family. In terms of assembly, fourteen ClpP subunits assemble into 2 heptameric rings which stack back to back to give a disk-like structure with a central cavity, resembling the structure of eukaryotic proteasomes.

It localises to the cytoplasm. It carries out the reaction Hydrolysis of proteins to small peptides in the presence of ATP and magnesium. alpha-casein is the usual test substrate. In the absence of ATP, only oligopeptides shorter than five residues are hydrolyzed (such as succinyl-Leu-Tyr-|-NHMec, and Leu-Tyr-Leu-|-Tyr-Trp, in which cleavage of the -Tyr-|-Leu- and -Tyr-|-Trp bonds also occurs).. Cleaves peptides in various proteins in a process that requires ATP hydrolysis. Has a chymotrypsin-like activity. Plays a major role in the degradation of misfolded proteins. The polypeptide is ATP-dependent Clp protease proteolytic subunit 3 (Nocardia farcinica (strain IFM 10152)).